The primary structure comprises 271 residues: Acyl-[acyl-carrier-protein]--UDP-N-acetylglucosamine O-acyltransferase (271 aa).

Belongs to the transferase hexapeptide repeat family. LpxA subfamily. As to quaternary structure, homotrimer.

The protein resides in the cytoplasm. The enzyme catalyses a (3R)-hydroxyacyl-[ACP] + UDP-N-acetyl-alpha-D-glucosamine = a UDP-3-O-[(3R)-3-hydroxyacyl]-N-acetyl-alpha-D-glucosamine + holo-[ACP]. Its pathway is glycolipid biosynthesis; lipid IV(A) biosynthesis; lipid IV(A) from (3R)-3-hydroxytetradecanoyl-[acyl-carrier-protein] and UDP-N-acetyl-alpha-D-glucosamine: step 1/6. Involved in the biosynthesis of lipid A, a phosphorylated glycolipid that anchors the lipopolysaccharide to the outer membrane of the cell. This is Acyl-[acyl-carrier-protein]--UDP-N-acetylglucosamine O-acyltransferase from Azorhizobium caulinodans (strain ATCC 43989 / DSM 5975 / JCM 20966 / LMG 6465 / NBRC 14845 / NCIMB 13405 / ORS 571).